We begin with the raw amino-acid sequence, 457 residues long: Siroheme synthase (457 aa).

The tract at residues 1 to 204 is precorrin-2 dehydrogenase /sirohydrochlorin ferrochelatase; the sequence is MDHLPIFCQL…NDQKAITETT (204 aa). NAD(+)-binding positions include 22–23 and 43–44; these read DV and LA. Position 128 is a phosphoserine (S128). The uroporphyrinogen-III C-methyltransferase stretch occupies residues 216–457; that stretch reads GEVVLVGAGP…RDKLNWFSNH (242 aa). P225 provides a ligand contact to S-adenosyl-L-methionine. The active-site Proton acceptor is D248. The active-site Proton donor is K270. S-adenosyl-L-methionine is bound by residues 301-303, I306, 331-332, M382, and G411; these read GGD and TA.

This sequence in the N-terminal section; belongs to the precorrin-2 dehydrogenase / sirohydrochlorin ferrochelatase family. It in the C-terminal section; belongs to the precorrin methyltransferase family.

It catalyses the reaction uroporphyrinogen III + 2 S-adenosyl-L-methionine = precorrin-2 + 2 S-adenosyl-L-homocysteine + H(+). It carries out the reaction precorrin-2 + NAD(+) = sirohydrochlorin + NADH + 2 H(+). The enzyme catalyses siroheme + 2 H(+) = sirohydrochlorin + Fe(2+). Its pathway is cofactor biosynthesis; adenosylcobalamin biosynthesis; precorrin-2 from uroporphyrinogen III: step 1/1. It functions in the pathway cofactor biosynthesis; adenosylcobalamin biosynthesis; sirohydrochlorin from precorrin-2: step 1/1. It participates in porphyrin-containing compound metabolism; siroheme biosynthesis; precorrin-2 from uroporphyrinogen III: step 1/1. The protein operates within porphyrin-containing compound metabolism; siroheme biosynthesis; siroheme from sirohydrochlorin: step 1/1. Its pathway is porphyrin-containing compound metabolism; siroheme biosynthesis; sirohydrochlorin from precorrin-2: step 1/1. Functionally, multifunctional enzyme that catalyzes the SAM-dependent methylations of uroporphyrinogen III at position C-2 and C-7 to form precorrin-2 via precorrin-1. Then it catalyzes the NAD-dependent ring dehydrogenation of precorrin-2 to yield sirohydrochlorin. Finally, it catalyzes the ferrochelation of sirohydrochlorin to yield siroheme. The sequence is that of Siroheme synthase from Shigella dysenteriae serotype 1 (strain Sd197).